A 155-amino-acid polypeptide reads, in one-letter code: Ribonuclease H (155 aa).

The RNase H type-1 domain occupies 1 to 142 (MLKQVEIFTD…CDELARAAAS (142 aa)). The Mg(2+) site is built by Asp10, Glu48, Asp70, and Asp134.

The protein belongs to the RNase H family. In terms of assembly, monomer. Mg(2+) serves as cofactor.

The protein localises to the cytoplasm. The enzyme catalyses Endonucleolytic cleavage to 5'-phosphomonoester.. In terms of biological role, endonuclease that specifically degrades the RNA of RNA-DNA hybrids. This Klebsiella pneumoniae subsp. pneumoniae (strain ATCC 700721 / MGH 78578) protein is Ribonuclease H.